Consider the following 291-residue polypeptide: Urease accessory protein UreD (291 aa).

It belongs to the UreD family. As to quaternary structure, ureD, UreF and UreG form a complex that acts as a GTP-hydrolysis-dependent molecular chaperone, activating the urease apoprotein by helping to assemble the nickel containing metallocenter of UreC. The UreE protein probably delivers the nickel.

It localises to the cytoplasm. Required for maturation of urease via the functional incorporation of the urease nickel metallocenter. This is Urease accessory protein UreD from Polynucleobacter asymbioticus (strain DSM 18221 / CIP 109841 / QLW-P1DMWA-1) (Polynucleobacter necessarius subsp. asymbioticus).